A 142-amino-acid polypeptide reads, in one-letter code: uncharacterized protein (142 aa).

The disordered stretch occupies residues 1–31 (MSLPKKKKPEVEEEEKPEEEEEKEEEQEIDI). Over residues 11 to 29 (VEEEEKPEEEEEKEEEQEI) the composition is skewed to acidic residues.

This is an uncharacterized protein from Acidianus sp. F28 (AFV-2).